The chain runs to 255 residues: 5-oxoprolinase subunit A (255 aa).

It belongs to the LamB/PxpA family. As to quaternary structure, forms a complex composed of PxpA, PxpB and PxpC.

The enzyme catalyses 5-oxo-L-proline + ATP + 2 H2O = L-glutamate + ADP + phosphate + H(+). Functionally, catalyzes the cleavage of 5-oxoproline to form L-glutamate coupled to the hydrolysis of ATP to ADP and inorganic phosphate. This Rhodopseudomonas palustris (strain BisB18) protein is 5-oxoprolinase subunit A.